The primary structure comprises 165 residues: Putative 4-hydroxy-4-methyl-2-oxoglutarate aldolase (165 aa).

Substrate is bound by residues 80 to 83 (GGNL) and R102. D103 serves as a coordination point for a divalent metal cation.

It belongs to the class II aldolase/RraA-like family. As to quaternary structure, homotrimer. Requires a divalent metal cation as cofactor.

It catalyses the reaction 4-hydroxy-4-methyl-2-oxoglutarate = 2 pyruvate. The catalysed reaction is oxaloacetate + H(+) = pyruvate + CO2. Catalyzes the aldol cleavage of 4-hydroxy-4-methyl-2-oxoglutarate (HMG) into 2 molecules of pyruvate. Also contains a secondary oxaloacetate (OAA) decarboxylase activity due to the common pyruvate enolate transition state formed following C-C bond cleavage in the retro-aldol and decarboxylation reactions. This chain is Putative 4-hydroxy-4-methyl-2-oxoglutarate aldolase, found in Cupriavidus taiwanensis (strain DSM 17343 / BCRC 17206 / CCUG 44338 / CIP 107171 / LMG 19424 / R1) (Ralstonia taiwanensis (strain LMG 19424)).